The sequence spans 513 residues: Putative ribose/galactose/methyl galactoside import ATP-binding protein 3 (513 aa).

2 consecutive ABC transporter domains span residues 15 to 252 and 263 to 508; these read IELT…VGRQ and TSAN…TQRE. An ATP-binding site is contributed by 47 to 54; the sequence is GENGAGKS.

The protein belongs to the ABC transporter superfamily. Carbohydrate importer 2 (CUT2) (TC 3.A.1.2) family.

The protein localises to the cell inner membrane. The enzyme catalyses D-ribose(out) + ATP + H2O = D-ribose(in) + ADP + phosphate + H(+). The catalysed reaction is D-galactose(out) + ATP + H2O = D-galactose(in) + ADP + phosphate + H(+). In terms of biological role, part of an ABC transporter complex involved in carbohydrate import. Could be involved in ribose, galactose and/or methyl galactoside import. Responsible for energy coupling to the transport system. The sequence is that of Putative ribose/galactose/methyl galactoside import ATP-binding protein 3 from Burkholderia ambifaria (strain ATCC BAA-244 / DSM 16087 / CCUG 44356 / LMG 19182 / AMMD) (Burkholderia cepacia (strain AMMD)).